The following is a 266-amino-acid chain: Putative carbamate hydrolase RutD (266 aa).

It belongs to the AB hydrolase superfamily. Hydrolase RutD family.

It carries out the reaction carbamate + 2 H(+) = NH4(+) + CO2. In terms of biological role, involved in pyrimidine catabolism. May facilitate the hydrolysis of carbamate, a reaction that can also occur spontaneously. The chain is Putative carbamate hydrolase RutD from Escherichia coli O157:H7.